A 205-amino-acid polypeptide reads, in one-letter code: Ribonuclease HII (205 aa).

Positions 14 to 205 constitute an RNase H type-2 domain; that stretch reads SLISGIDEAG…SFRLKQLGEK (192 aa). A divalent metal cation contacts are provided by Asp20, Glu21, and Asp117.

The protein belongs to the RNase HII family. Mn(2+) serves as cofactor. Mg(2+) is required as a cofactor.

It is found in the cytoplasm. The enzyme catalyses Endonucleolytic cleavage to 5'-phosphomonoester.. Its function is as follows. Endonuclease that specifically degrades the RNA of RNA-DNA hybrids. This Chlorobium phaeobacteroides (strain DSM 266 / SMG 266 / 2430) protein is Ribonuclease HII.